Consider the following 340-residue polypeptide: Ribosomal RNA large subunit methyltransferase F (340 aa).

Belongs to the methyltransferase superfamily. METTL16/RlmF family.

The protein localises to the cytoplasm. The enzyme catalyses adenosine(1618) in 23S rRNA + S-adenosyl-L-methionine = N(6)-methyladenosine(1618) in 23S rRNA + S-adenosyl-L-homocysteine + H(+). In terms of biological role, specifically methylates the adenine in position 1618 of 23S rRNA. The polypeptide is Ribosomal RNA large subunit methyltransferase F (Dechloromonas aromatica (strain RCB)).